Reading from the N-terminus, the 968-residue chain is Phosphoenolpyruvate carboxylase (968 aa).

Ser11 carries the post-translational modification Phosphoserine. Catalysis depends on residues His172 and Lys602.

The protein belongs to the PEPCase type 1 family. In terms of assembly, homotetramer. The cofactor is Mg(2+).

It is found in the cytoplasm. The enzyme catalyses oxaloacetate + phosphate = phosphoenolpyruvate + hydrogencarbonate. By light-reversible phosphorylation. In terms of biological role, through the carboxylation of phosphoenolpyruvate (PEP) it forms oxaloacetate, a four-carbon dicarboxylic acid source for the tricarboxylic acid cycle. The sequence is that of Phosphoenolpyruvate carboxylase from Phaseolus vulgaris (Kidney bean).